We begin with the raw amino-acid sequence, 940 residues long: Valine--tRNA ligase (940 aa).

The 'HIGH' region signature appears at 47-57 (PNVTGILHMGH). The short motif at 564 to 568 (KLSKS) is the 'KMSKS' region element. Lys-567 lines the ATP pocket. A coiled-coil region spans residues 872 to 938 (PMEHITKERN…LQSILDKLAS (67 aa)).

The protein belongs to the class-I aminoacyl-tRNA synthetase family. ValS type 1 subfamily. In terms of assembly, monomer.

It localises to the cytoplasm. It catalyses the reaction tRNA(Val) + L-valine + ATP = L-valyl-tRNA(Val) + AMP + diphosphate. Its function is as follows. Catalyzes the attachment of valine to tRNA(Val). As ValRS can inadvertently accommodate and process structurally similar amino acids such as threonine, to avoid such errors, it has a 'posttransfer' editing activity that hydrolyzes mischarged Thr-tRNA(Val) in a tRNA-dependent manner. This is Valine--tRNA ligase from Chlamydia caviae (strain ATCC VR-813 / DSM 19441 / 03DC25 / GPIC) (Chlamydophila caviae).